Consider the following 423-residue polypeptide: Histidine--tRNA ligase (423 aa).

The protein belongs to the class-II aminoacyl-tRNA synthetase family. As to quaternary structure, homodimer.

It is found in the cytoplasm. It catalyses the reaction tRNA(His) + L-histidine + ATP = L-histidyl-tRNA(His) + AMP + diphosphate + H(+). The chain is Histidine--tRNA ligase from Actinobacillus pleuropneumoniae serotype 7 (strain AP76).